Here is a 326-residue protein sequence, read N- to C-terminus: MAFMRSKPSLGSLARVAFRWCGPGVGLVSYSQEPYLVKAVQGKSKPRSPHLTSPQCSPEHRPRRFRPPSASGRTAFSSAPRPKADVMGVADGVGGWRDRGIDARALLPGSDRCFVHAQKPTFDARNPRQLLSECYGEMKRKWKPILGSSTACVVAFNRSESALYTANLGDSGYVVIRNGSVLDRSEEQTHFFNMPFQLTVPPPDSNREMWFCDDPSEAVATRLLLQPDDLVLVATDGLFDNMPEQMLLEMLSKVQGVHEQKAIQEAVNRVVERAGALSINPIYKSPFCLRALENNVPYGGGGKPDDITVVLASVAMTPVQYRGGFQ.

The segment at 40–83 is disordered; the sequence is VQGKSKPRSPHLTSPQCSPEHRPRRFRPPSASGRTAFSSAPRPK. The 251-residue stretch at 64–314 folds into the PPM-type phosphatase domain; that stretch reads RFRPPSASGR…DDITVVLASV (251 aa). Mn(2+)-binding residues include D91, G92, and D236.

It belongs to the PP2C family. Requires Mg(2+) as cofactor. Mn(2+) is required as a cofactor.

The catalysed reaction is O-phospho-L-seryl-[protein] + H2O = L-seryl-[protein] + phosphate. The enzyme catalyses O-phospho-L-threonyl-[protein] + H2O = L-threonyl-[protein] + phosphate. The sequence is that of Protein phosphatase PTC7 homolog fig from Drosophila persimilis (Fruit fly).